Here is a 146-residue protein sequence, read N- to C-terminus: MADLFFGGPFRRILYGRPFPPDWASASATAAMDWVETPTSHVLRINVPGLGKDDVKVQVEDGNVLTVRGAAPHAAAEKEREREKDVVWHVAERGRPEFAREVALPAEVRVEQIRASVDNGVLTVVVPKEPAPARPRTRPIAVSSKL.

Residues 23-143 enclose the sHSP domain; sequence WASASATAAM…RPRTRPIAVS (121 aa). The short motif at 144 to 146 is the Microbody targeting signal element; it reads SKL.

It belongs to the small heat shock protein (HSP20) family. As to quaternary structure, may form oligomeric structures.

It is found in the peroxisome. The polypeptide is 16.0 kDa heat shock protein, peroxisomal (HSP16.0) (Oryza sativa subsp. japonica (Rice)).